The following is a 563-amino-acid chain: Secreted lipase ARB07186/07185 (563 aa).

Positions M1 to A20 are cleaved as a signal peptide. The cysteines at positions 83 and 101 are disulfide-linked. S215 acts as the Acyl-ester intermediate in catalysis. C268 and C281 form a disulfide bridge.

This sequence belongs to the type-B carboxylesterase/lipase family.

Its subcellular location is the secreted. It carries out the reaction a triacylglycerol + H2O = a diacylglycerol + a fatty acid + H(+). This Arthroderma benhamiae (strain ATCC MYA-4681 / CBS 112371) (Trichophyton mentagrophytes) protein is Secreted lipase ARB07186/07185.